Consider the following 290-residue polypeptide: 4-diphosphocytidyl-2-C-methyl-D-erythritol kinase (290 aa).

Residue Lys-10 is part of the active site. 96–106 (PIAAGLGGGSS) contacts ATP. Asp-138 is a catalytic residue.

Belongs to the GHMP kinase family. IspE subfamily.

The catalysed reaction is 4-CDP-2-C-methyl-D-erythritol + ATP = 4-CDP-2-C-methyl-D-erythritol 2-phosphate + ADP + H(+). Its pathway is isoprenoid biosynthesis; isopentenyl diphosphate biosynthesis via DXP pathway; isopentenyl diphosphate from 1-deoxy-D-xylulose 5-phosphate: step 3/6. Its function is as follows. Catalyzes the phosphorylation of the position 2 hydroxy group of 4-diphosphocytidyl-2C-methyl-D-erythritol. This is 4-diphosphocytidyl-2-C-methyl-D-erythritol kinase from Caulobacter vibrioides (strain NA1000 / CB15N) (Caulobacter crescentus).